The chain runs to 402 residues: Glutamyl-tRNA reductase (402 aa).

Residues 48–51 (TCNR), serine 91, 96–98 (EDQ), and glutamine 102 each bind substrate. Cysteine 49 (nucleophile) is an active-site residue. Residue 171 to 176 (GAGKMG) participates in NADP(+) binding.

Belongs to the glutamyl-tRNA reductase family. In terms of assembly, homodimer.

It catalyses the reaction (S)-4-amino-5-oxopentanoate + tRNA(Glu) + NADP(+) = L-glutamyl-tRNA(Glu) + NADPH + H(+). Its pathway is porphyrin-containing compound metabolism; protoporphyrin-IX biosynthesis; 5-aminolevulinate from L-glutamyl-tRNA(Glu): step 1/2. Its function is as follows. Catalyzes the NADPH-dependent reduction of glutamyl-tRNA(Glu) to glutamate 1-semialdehyde (GSA). This is Glutamyl-tRNA reductase from Methanothermobacter thermautotrophicus (strain ATCC 29096 / DSM 1053 / JCM 10044 / NBRC 100330 / Delta H) (Methanobacterium thermoautotrophicum).